A 400-amino-acid chain; its full sequence is Subtilisin-like protease 2 (400 aa).

The first 20 residues, methionine 1 to alanine 20, serve as a signal peptide directing secretion. A propeptide spanning residues alanine 21–asparagine 119 is cleaved from the precursor. The 76-residue stretch at serine 42–glutamine 117 folds into the Inhibitor I9 domain. N-linked (GlcNAc...) asparagine glycosylation occurs at asparagine 82. Residues threonine 128–alanine 400 enclose the Peptidase S8 domain. Catalysis depends on charge relay system residues aspartate 160, histidine 192, and serine 345.

Belongs to the peptidase S8 family.

The protein resides in the secreted. Its activity is regulated as follows. Potently inhibited by the serine peptidase inhibitor chymostatin. Also inhibited by antpain and PMSF. Functionally, major secreted subtilisin-like serine endopeptidase. Preferentially cleaves substrates containing hydrophobic residues at P4, positively charged residues at P3, small or flexible residues at P2, and large, bulky residues at P1. Mediates the degradation of collagen, the major structural protein in the mammalian host. Degrades the nonhelical regions of collagen that function in the cross-linking of the helical components. May function as virulence factor involved in epidermal wing necrosis observed in white nose syndrome (WNS) in bats. The chain is Subtilisin-like protease 2 from Pseudogymnoascus destructans (strain ATCC MYA-4855 / 20631-21) (Bat white-nose syndrome fungus).